The following is a 295-amino-acid chain: Hydroxylase/desaturase efuI (295 aa).

This sequence belongs to the asaB hydroxylase/desaturase family.

Its pathway is secondary metabolite biosynthesis; terpenoid biosynthesis. Functionally, hydroxylase/desaturase; part of the gene cluster that mediates the biosynthesis of enfumafungin, a glycosylated fernene-type triterpenoid with potent antifungal activity, mediated by its interaction with beta-1,3-glucan synthase and the fungal cell wall. The pathway begins with the terpene cyclase-glycosyl transferase fusion protein that most likely uses 2,3-oxidosqualene as substrate and catalyzes glycosylation immediately after cyclization. The fernene glycoside then could be processed by the desaturase efuI which catalyzes isomerization of a double bond established by efuA to form the core structure. The latter would then undergo a series of hydroxylations in unknown order at C-2, C-19, C-23 and C-25, which would be catalyzed by two of the three cytochrome P450 monooxygenases efuB, efuG or efuH. The hydroxy-group at C-25 becomes oxidized by the dehydrogenase efuE to enable a spontaneous, non-enzymatic hemiacetal formation with C-23. After hydroxylation at C-2, acetylation by the acetyltransferase efuC takes place. The final steps in enfumafungin biosynthesis require expansion of the 5-membered ring by lactonization via a Baeyer-Villiger reaction mediated by one of the BGC's cytochrome P450 monooxygenases (efuB, efuG or efuH) followed by ring cleavage. This type of reaction would establish a double bond between C-20 and C-21 which could be reduced by the reductase efuL to form the final product. This is Hydroxylase/desaturase efuI from Hormonema carpetanum.